Reading from the N-terminus, the 142-residue chain is Large ribosomal subunit protein uL13 (142 aa).

Belongs to the universal ribosomal protein uL13 family. In terms of assembly, part of the 50S ribosomal subunit.

Functionally, this protein is one of the early assembly proteins of the 50S ribosomal subunit, although it is not seen to bind rRNA by itself. It is important during the early stages of 50S assembly. In Citrifermentans bemidjiense (strain ATCC BAA-1014 / DSM 16622 / JCM 12645 / Bem) (Geobacter bemidjiensis), this protein is Large ribosomal subunit protein uL13.